Consider the following 421-residue polypeptide: Serine--tRNA ligase (421 aa).

L-serine is bound at residue 230 to 232 (TAE). Position 259–261 (259–261 (RRE)) interacts with ATP. Glu282 is a binding site for L-serine. Position 346-349 (346-349 (EISS)) interacts with ATP. Position 380 (Ser380) interacts with L-serine.

It belongs to the class-II aminoacyl-tRNA synthetase family. Type-1 seryl-tRNA synthetase subfamily. Homodimer. The tRNA molecule binds across the dimer.

It localises to the cytoplasm. The catalysed reaction is tRNA(Ser) + L-serine + ATP = L-seryl-tRNA(Ser) + AMP + diphosphate + H(+). It carries out the reaction tRNA(Sec) + L-serine + ATP = L-seryl-tRNA(Sec) + AMP + diphosphate + H(+). The protein operates within aminoacyl-tRNA biosynthesis; selenocysteinyl-tRNA(Sec) biosynthesis; L-seryl-tRNA(Sec) from L-serine and tRNA(Sec): step 1/1. In terms of biological role, catalyzes the attachment of serine to tRNA(Ser). Is also able to aminoacylate tRNA(Sec) with serine, to form the misacylated tRNA L-seryl-tRNA(Sec), which will be further converted into selenocysteinyl-tRNA(Sec). In Methanosarcina acetivorans (strain ATCC 35395 / DSM 2834 / JCM 12185 / C2A), this protein is Serine--tRNA ligase.